The chain runs to 601 residues: Probable HECT-type ubiquitin ligase-interacting protein creD (601 aa).

2 disordered regions span residues 374–397 (EVDP…GTLS) and 454–496 (VSTD…GMAT). Residues 455-473 (STDSFGPSSGSNSQSPASP) are compositionally biased toward low complexity. A compositionally biased stretch (basic and acidic residues) spans 475 to 489 (LSRRPSDEGYHDHDY).

Belongs to the arrestin family. As to quaternary structure, interacts with hulA.

Component of the regulatory network controlling carbon source utilization through ubiquitination and deubiquitination involving creA, creB, creC, creD and acrB. May be involved in signaling by recognizing appropriately phosphorylated substrates via its arrestin domains and then recruit a HECT-type ubiquitin ligase such as hulA, leading to ubiquitination of the substrate, providing a link between ubiquitination and phosphorylation in protein regulation and stability. In Aspergillus fumigatus (strain CBS 144.89 / FGSC A1163 / CEA10) (Neosartorya fumigata), this protein is Probable HECT-type ubiquitin ligase-interacting protein creD (creD).